Here is a 320-residue protein sequence, read N- to C-terminus: G-protein coupled receptor homolog FPV021 (320 aa).

The Extracellular segment spans residues 1–18 (MDTDYGTVHTQQSVKGNT). A helical membrane pass occupies residues 19–39 (LILLIYFISFIVGFPGNCTVI). Topologically, residues 40–52 (WFTGYRWKKSVTT) are cytoplasmic. Residues 53-73 (IWFLNLAIADTLFVIFIPFEI) traverse the membrane as a helical segment. The Extracellular segment spans residues 74 to 91 (TYILMGHYWPFGLFVCRI). An intrachain disulfide couples Cys89 to Cys167. A helical membrane pass occupies residues 92 to 112 (GSLMFNTGMYASIFFLTFISI). Residues 113-133 (DRYCLAFRRDICNKYRYRINI) lie on the Cytoplasmic side of the membrane. The helical transmembrane segment at 134-154 (MVMIIISWIISILLSTPYMYF) threads the bilayer. Residues 155 to 188 (KNTNEKYRNNRDCLEDYHSDNNTYLLRRVVFCIS) are Extracellular-facing. A glycan (N-linked (GlcNAc...) asparagine; by host) is linked at Asn175. A helical transmembrane segment spans residues 189-209 (LVMRYLVPSVVMLFCYCLLLF). Residues 210–222 (KHSLFLSKGQTYT) lie on the Cytoplasmic side of the membrane. The helical transmembrane segment at 223 to 243 (IVIMITSFMVLWTPYNILYFI) threads the bilayer. The Extracellular portion of the chain corresponds to 244 to 260 (DVIGSHYYNADTIIDAA). A helical membrane pass occupies residues 261 to 281 (PISISLIFLSSSINPMIYMLV). Topologically, residues 282–320 (GRYVSFENYSMRESLKLILSEERDNQTNHENEIKMENIN) are cytoplasmic.

It belongs to the G-protein coupled receptor 1 family.

The protein resides in the host cell membrane. This is G-protein coupled receptor homolog FPV021 from Vertebrata (FPV).